A 316-amino-acid polypeptide reads, in one-letter code: Beta-ketoacyl-[acyl-carrier-protein] synthase III (316 aa).

Catalysis depends on residues cysteine 112 and histidine 243. The ACP-binding stretch occupies residues 244-248; sequence QANLR. Asparagine 273 is an active-site residue.

Belongs to the thiolase-like superfamily. FabH family. Homodimer.

It localises to the cytoplasm. It carries out the reaction malonyl-[ACP] + acetyl-CoA + H(+) = 3-oxobutanoyl-[ACP] + CO2 + CoA. Its pathway is lipid metabolism; fatty acid biosynthesis. Functionally, catalyzes the condensation reaction of fatty acid synthesis by the addition to an acyl acceptor of two carbons from malonyl-ACP. Catalyzes the first condensation reaction which initiates fatty acid synthesis and may therefore play a role in governing the total rate of fatty acid production. Possesses both acetoacetyl-ACP synthase and acetyl transacylase activities. Its substrate specificity determines the biosynthesis of branched-chain and/or straight-chain of fatty acids. The polypeptide is Beta-ketoacyl-[acyl-carrier-protein] synthase III (Yersinia pestis (strain Pestoides F)).